Here is a 170-residue protein sequence, read N- to C-terminus: E1B protein, small T-antigen (170 aa).

Residues 137–170 (PAQPPHGLDPVREEEEEEEEEENLRAGLDPQTEL) are disordered. Residues 148-158 (REEEEEEEEEE) show a composition bias toward acidic residues.

Belongs to the adenoviridae E1B 19 kDa protein family.

The protein resides in the host cell membrane. Its subcellular location is the host nucleus envelope. The protein localises to the host nucleus lamina. Putative adenovirus Bcl-2 homolog that inhibits apoptosis induced by TNF or FAS pathways, as well as p53-mediated apoptosis. Without E1B 19K function, virus production is compromised because of premature death of host cell. Interacts with Bax protein in cell lysates. The chain is E1B protein, small T-antigen from Homo sapiens (Human).